Consider the following 181-residue polypeptide: Inner membrane-spanning protein YciB (181 aa).

5 helical membrane passes run 10–30 (LIIF…GALI), 50–70 (MHLI…VFHD), 72–92 (AFIK…LGVS), 118–138 (VTWY…YVAF), and 148–168 (FKVF…VFYL).

Belongs to the YciB family.

The protein resides in the cell inner membrane. Plays a role in cell envelope biogenesis, maintenance of cell envelope integrity and membrane homeostasis. The protein is Inner membrane-spanning protein YciB of Shewanella sp. (strain MR-7).